Here is a 168-residue protein sequence, read N- to C-terminus: MSDVTVTPSATSKLTGILKPGSYEIEKGHFSRYFSLNWWQLIVVVGIAISGIAAIANTYDAITGVDKDIEGCENVSNLRKKLEAKFIIIIVLSCLAVVGGIILAWLLRSGTNQRKLLTMGLTTGGILGILYALTIRFRGTSNMVKLGISWVSLLAFVLLGFFINTSGE.

A helical transmembrane segment spans residues 36-56 (LNWWQLIVVVGIAISGIAAIA). Asn-74 carries N-linked (GlcNAc...) asparagine; by host glycosylation. 3 consecutive transmembrane segments (helical) span residues 86 to 106 (FIIIIVLSCLAVVGGIILAWL), 115 to 135 (KLLTMGLTTGGILGILYALTI), and 143 to 163 (MVKLGISWVSLLAFVLLGFFI). Asn-164 carries N-linked (GlcNAc...) asparagine; by host glycosylation.

It localises to the membrane. This is an uncharacterized protein from Acanthamoeba polyphaga mimivirus (APMV).